The chain runs to 81 residues: Acyl carrier protein (81 aa).

The 79-residue stretch at 2–80 folds into the Carrier domain; that stretch reads ASNEEILAGL…DAVSFIANAQ (79 aa). Ser-40 carries the post-translational modification O-(pantetheine 4'-phosphoryl)serine.

The protein belongs to the acyl carrier protein (ACP) family. 4'-phosphopantetheine is transferred from CoA to a specific serine of apo-ACP by AcpS. This modification is essential for activity because fatty acids are bound in thioester linkage to the sulfhydryl of the prosthetic group.

It is found in the cytoplasm. Its pathway is lipid metabolism; fatty acid biosynthesis. Its function is as follows. Carrier of the growing fatty acid chain in fatty acid biosynthesis. This chain is Acyl carrier protein, found in Paenarthrobacter aurescens (strain TC1).